A 159-amino-acid polypeptide reads, in one-letter code: Cyclic pyranopterin monophosphate synthase (159 aa).

Substrate-binding positions include 75 to 77 (LCH) and 113 to 114 (ME). The active site involves Asp128.

It belongs to the MoaC family. As to quaternary structure, homohexamer; trimer of dimers.

It carries out the reaction (8S)-3',8-cyclo-7,8-dihydroguanosine 5'-triphosphate = cyclic pyranopterin phosphate + diphosphate. It functions in the pathway cofactor biosynthesis; molybdopterin biosynthesis. Functionally, catalyzes the conversion of (8S)-3',8-cyclo-7,8-dihydroguanosine 5'-triphosphate to cyclic pyranopterin monophosphate (cPMP). The chain is Cyclic pyranopterin monophosphate synthase from Cupriavidus metallidurans (strain ATCC 43123 / DSM 2839 / NBRC 102507 / CH34) (Ralstonia metallidurans).